We begin with the raw amino-acid sequence, 465 residues long: Protein hedgehog (465 aa).

Cysteine 79 carries N-palmitoyl cysteine lipidation. Glutamate 143, glutamate 144, aspartate 149, threonine 179, glutamate 180, aspartate 183, and aspartate 185 together coordinate Ca(2+). Glycine 251 carries Cholesterol glycine ester lipidation.

The protein belongs to the hedgehog family. As to quaternary structure, interacts with shf. The C-terminal part of the hedgehog protein precursor displays an autoproteolysis activity that results in the cleavage of the full-length protein into two parts (N-product and C-product). In addition, the C-terminal part displays a cholesterol transferase activity that results by the covalent attachment of a cholesterol moiety to the C-terminal of the newly generated N-product. The N-product is the active species in both local and long-range signaling, whereas the C-product has no signaling activity. Post-translationally, cholesterylation is required for N-product targeting to lipid rafts and multimerization. In terms of processing, N-palmitoylation by Rasp of the hedgehog N-product, within the secretory pathway, is required for the embryonic and larval patterning activities of the hedgehog signal.

The protein localises to the nucleus. The protein resides in the cytoplasm. Its subcellular location is the cell membrane. It carries out the reaction glycyl-L-cysteinyl-[protein] + cholesterol + H(+) = [protein]-C-terminal glycyl cholesterol ester + N-terminal L-cysteinyl-[protein]. Its function is as follows. The C-terminal part of the hedgehog protein precursor displays an autoproteolysis activity that results in the cleavage of the full-length protein into two parts (N-product and C-product). In addition, the C-terminal part displays a cholesterol transferase activity that results by the covalent attachment of a cholesterol moiety to the C-terminal of the newly generated N-product. Once cleaved, the C-product has no signaling activity and diffuses from the cell. In terms of biological role, the dually lipidated hedgehog protein N-product is a morphogen which is essential for a variety of patterning events during development. Establishes the anterior-posterior axis of the embryonic segments and patterns the larval imaginal disks. Binds to the patched (ptc) receptor, which functions in association with smoothened (smo), to activate the transcription of target genes wingless (wg), decapentaplegic (dpp) and ptc. In the absence of hh, ptc represses the constitutive signaling activity of smo through fused (fu). Essential component of a signaling pathway which regulates the Duox-dependent gut immune response to bacterial uracil; required to activate Cad99C-dependent endosome formation, norpA-dependent Ca2+ mobilization and p38 MAPK, which are essential steps in the Duox-dependent production of reactive oxygen species (ROS) in response to intestinal bacterial infection. During photoreceptor differentiation, it up-regulates transcription of Ubr3, which in turn promotes the hh-signaling pathway by mediating the ubiquitination and degradation of cos. The sequence is that of Protein hedgehog from Drosophila erecta (Fruit fly).